Reading from the N-terminus, the 287-residue chain is ATP synthase gamma chain (287 aa).

Belongs to the ATPase gamma chain family. As to quaternary structure, F-type ATPases have 2 components, CF(1) - the catalytic core - and CF(0) - the membrane proton channel. CF(1) has five subunits: alpha(3), beta(3), gamma(1), delta(1), epsilon(1). CF(0) has three main subunits: a, b and c.

Its subcellular location is the cell inner membrane. Produces ATP from ADP in the presence of a proton gradient across the membrane. The gamma chain is believed to be important in regulating ATPase activity and the flow of protons through the CF(0) complex. The sequence is that of ATP synthase gamma chain from Cronobacter sakazakii (strain ATCC BAA-894) (Enterobacter sakazakii).